The chain runs to 444 residues: Adenylosuccinate synthetase (444 aa).

GTP-binding positions include 19-25 (GDEGKGK) and 47-49 (GHT). D20 functions as the Proton acceptor in the catalytic mechanism. Mg(2+) contacts are provided by D20 and G47. Residues 20-23 (DEGK), 45-48 (NAGH), T139, R153, Q234, T249, and R317 each bind IMP. Residue H48 is the Proton donor of the active site. 313–319 (TVTGRPR) contacts substrate. Residues R319, 345–347 (KLD), and 427–429 (STG) each bind GTP.

Belongs to the adenylosuccinate synthetase family. In terms of assembly, homodimer. Requires Mg(2+) as cofactor.

The protein resides in the cytoplasm. It catalyses the reaction IMP + L-aspartate + GTP = N(6)-(1,2-dicarboxyethyl)-AMP + GDP + phosphate + 2 H(+). It functions in the pathway purine metabolism; AMP biosynthesis via de novo pathway; AMP from IMP: step 1/2. Functionally, plays an important role in the de novo pathway of purine nucleotide biosynthesis. Catalyzes the first committed step in the biosynthesis of AMP from IMP. This chain is Adenylosuccinate synthetase, found in Methylibium petroleiphilum (strain ATCC BAA-1232 / LMG 22953 / PM1).